The chain runs to 291 residues: 4-diphosphocytidyl-2-C-methyl-D-erythritol kinase (291 aa).

Residue Lys8 is part of the active site. 89–99 (PIGAGVGGGSS) contacts ATP. The active site involves Asp131.

The protein belongs to the GHMP kinase family. IspE subfamily.

It carries out the reaction 4-CDP-2-C-methyl-D-erythritol + ATP = 4-CDP-2-C-methyl-D-erythritol 2-phosphate + ADP + H(+). It functions in the pathway isoprenoid biosynthesis; isopentenyl diphosphate biosynthesis via DXP pathway; isopentenyl diphosphate from 1-deoxy-D-xylulose 5-phosphate: step 3/6. In terms of biological role, catalyzes the phosphorylation of the position 2 hydroxy group of 4-diphosphocytidyl-2C-methyl-D-erythritol. The chain is 4-diphosphocytidyl-2-C-methyl-D-erythritol kinase from Chlamydia caviae (strain ATCC VR-813 / DSM 19441 / 03DC25 / GPIC) (Chlamydophila caviae).